A 371-amino-acid chain; its full sequence is Bifunctional chorismate mutase/prephenate dehydratase (371 aa).

The Chorismate mutase domain maps to 1–92; it reads MTLKNALLAF…DSVLTQKKWI (92 aa). Substrate-binding residues include R11, R28, K39, D48, E52, S84, and Q88. Positions 104 to 284 constitute a Prephenate dehydratase domain; that stretch reads KISFLGSFGS…NITQFIILAQ (181 aa). A regulatory region spans residues 285-371; that stretch reads KKTYITNKKT…IKCIKILGCF (87 aa).

The protein localises to the cytoplasm. The enzyme catalyses chorismate = prephenate. It catalyses the reaction prephenate + H(+) = 3-phenylpyruvate + CO2 + H2O. It functions in the pathway amino-acid biosynthesis; L-phenylalanine biosynthesis; phenylpyruvate from prephenate: step 1/1. It participates in metabolic intermediate biosynthesis; prephenate biosynthesis; prephenate from chorismate: step 1/1. Functionally, catalyzes the Claisen rearrangement of chorismate to prephenate and the decarboxylation/dehydration of prephenate to phenylpyruvate. This chain is Bifunctional chorismate mutase/prephenate dehydratase (pheA), found in Buchnera aphidicola subsp. Baizongia pistaciae (strain Bp).